The chain runs to 1282 residues: MEQNNGTTEHPKEVLDQTNPSNEVTGVPNGNHAEGEGDQNAGEAPGLFQITVKLPHEPYKIQVMVSNQEQVQDVRQSIVELPGTFQYTSFHLEHNGERINDYVELSEVKDLKPDAEIVLVEDPYTEKEARMHLVRIRELIGASGDRVDNLHGICAGLSLHDSVAAGEQLSDDIPSKEENSANGTAEHALVGYEVPGPADLRTILPRKQAPFPKTVKSISLSPWNPPPYHLRQKGHLLYLQVTTNEGEQYQITSHVSGFFVNKCSNSKFDPFPRAAPKNYSAHSLLTLISLISPSFENSFKALQEANNKKDLLTTFPFQNSIPHNPWLVPPTSSPATAHQSDITRPQENYLIAGVDNSETLRDWNEEFQTTRELPRDTVQDKVFRERLTSKLFADYNDAAARGAVLVARGEVAPLNPTEGRDAQIFVYNNIFFSFGADGVGTFASEGGDEAARVAVAKDVMGVKAVNQLDIAGLFTPGTMVIDYLGKRVVGQSIVPGIFKQREPGEHQIDYGGVDGKDVIAKHEAFVPVFEKLSKALRVKKHPVWDKDGARHELESSVETKGLLGTDGRKYVLDLYRITPLDVLWYEDSENHEPYPHRMSVLRLELVESYWRFKMGQYVKEEVEKRRKAKKEAEEKAEESKPNGEAADASENAESEKKETTSPDQERVDISDFKLALNPDVFSGQVPQTDEEKEEWAQDEKEVRDACNYLRSKVLPELIQDLHDGDVGFPMDGQSLSQLLHKRGINVRYLGKLAALAKEKGARLQALTALMTQDMVARAFKHIANRYLRNLPSAFATSCIAHLLNCLLGTEVNSKPRAEIDESLREIYPEGDFSFEQVTPTALKEDIEKQIKIRYRFSLDADWTSSLRHLQLLRDISLKLGLQLGAKNYAFDRSQLKNQDHSPAANGTRTPEEGGKKKKKKGSDQASPRPAQSPAPAVTFVPDDILNIVPIVKDASPRSALSEEALEAGRISLMQNQKELGQELILESLSLHEQIYGILHPEVAKLYHQLSMLYYQSDDKDAAVELARKAVIVTERTMGVDSADAILSYLNLSLFEHATGNTKVALVYIRHALELWKIIYGPNHPDSITTMNNAAVMLQHLKLYPDSRKWFEASLTVCEELFGRQSVNTATILFQLAQALALDQDSKAAVNRMRDAYNIFLNELGPEDRNTKEAESWLEQLTQNAVYIAKHAKDIQARRRRLANLPTRLGTKPQPQVGQTTSEMANAAEARGNASLDPRSIDELLKFIEGGESSAPRTKQKKRAAARNPKLRGSKQSTVKPSS.

A disordered region spans residues 1 to 43 (MEQNNGTTEHPKEVLDQTNPSNEVTGVPNGNHAEGEGDQNAGE). One can recognise a Clu domain in the interval 341–585 (DITRPQENYL…RITPLDVLWY (245 aa)). Composition is skewed to basic and acidic residues over residues 631 to 641 (EAEEKAEESKP) and 653 to 669 (ESEK…RVDI). Disordered regions lie at residues 631 to 669 (EAEE…RVDI) and 892 to 936 (RSQL…PAPA). The span at 924–936 (QASPRPAQSPAPA) shows a compositional bias: low complexity. The TPR repeat unit spans residues 1003 to 1036 (AKLYHQLSMLYYQSDDKDAAVELARKAVIVTERT). The segment at 1202–1282 (ANLPTRLGTK…SKQSTVKPSS (81 aa)) is disordered. The segment covering 1212-1223 (PQPQVGQTTSEM) has biased composition (polar residues). Basic residues predominate over residues 1257–1272 (TKQKKRAAARNPKLRG). Over residues 1273–1282 (SKQSTVKPSS) the composition is skewed to polar residues.

It belongs to the CLU family. May associate with the eukaryotic translation initiation factor 3 (eIF-3) complex.

The protein resides in the cytoplasm. In terms of biological role, mRNA-binding protein involved in proper cytoplasmic distribution of mitochondria. The polypeptide is Clustered mitochondria protein homolog (Coccidioides immitis (strain RS) (Valley fever fungus)).